Reading from the N-terminus, the 177-residue chain is GTP-dependent dephospho-CoA kinase (177 aa).

The GTP site is built by Asp-45, Val-46, Val-47, Asp-64, and Glu-120.

This sequence belongs to the GTP-dependent DPCK family.

The enzyme catalyses 3'-dephospho-CoA + GTP = GDP + CoA + H(+). The protein operates within cofactor biosynthesis; coenzyme A biosynthesis. Its function is as follows. Catalyzes the GTP-dependent phosphorylation of the 3'-hydroxyl group of dephosphocoenzyme A to form coenzyme A (CoA). In Halobacterium salinarum (strain ATCC 29341 / DSM 671 / R1), this protein is GTP-dependent dephospho-CoA kinase.